Consider the following 162-residue polypeptide: Large ribosomal subunit protein eL24 (162 aa).

2 disordered regions span residues 64-83 and 117-162; these read DIHAEAAKKRRRTTKKPYSR and ERIK…GGKR. The segment covering 71–81 has biased composition (basic residues); it reads KKRRRTTKKPY. A compositionally biased stretch (basic and acidic residues) spans 117 to 135; that stretch reads ERIKKTKDEKKAKKAEVTK.

This sequence belongs to the eukaryotic ribosomal protein eL24 family.

The protein localises to the cytoplasm. This chain is Large ribosomal subunit protein eL24 (RPL24), found in Hordeum vulgare (Barley).